The primary structure comprises 137 residues: Competence protein ComGG (137 aa).

The chain crosses the membrane as a helical span at residues 10–30 (GVLLYAVTIAAIFSLLLQFYL). Positions 106-137 (EKRDKKEEVATDSSEKVEKKKSEEKPEKKENS) are disordered.

The transformation pili are flexible filaments, consisting mainly of the major pilin ComGC and smaller amounts of the minor pilins, including at least ComGD, ComGF and ComGG, and perhaps ComGE. Interacts with ComGC; the interaction is probably direct. Interacts with ComGD. Interacts with ComGE. Interacts with ComGF. May act as a link between ComGC, ComGD and ComGF.

The protein localises to the fimbrium. Its subcellular location is the cell membrane. In terms of biological role, required for formation of the type IV-like pilus (T4P) that plays a role in transformation. Transformation pili are dynamically extended and retracted, perhaps thereby promoting DNA uptake and transformation. Required for transformation. The polypeptide is Competence protein ComGG (Streptococcus pneumoniae (strain ATCC BAA-255 / R6)).